Reading from the N-terminus, the 247-residue chain is ATP synthase subunit a, chloroplastic (247 aa).

5 consecutive transmembrane segments (helical) span residues 36 to 56, 95 to 115, 134 to 154, 199 to 219, and 220 to 240; these read GQVLMTSWFVFAVIAILSIAG, IPFLGTLFLFIFVSNWSGALI, INTTVALALLTSTAYFYAGFS, LVVGVLVALVPLVVPIPIMLL, and GLFTSGIQALVFATLAGAYIG.

It belongs to the ATPase A chain family. In terms of assembly, F-type ATPases have 2 components, CF(1) - the catalytic core - and CF(0) - the membrane proton channel. CF(1) has five subunits: alpha(3), beta(3), gamma(1), delta(1), epsilon(1). CF(0) has four main subunits: a, b, b' and c.

It is found in the plastid. It localises to the chloroplast thylakoid membrane. Its function is as follows. Key component of the proton channel; it plays a direct role in the translocation of protons across the membrane. The protein is ATP synthase subunit a, chloroplastic of Tupiella akineta (Green alga).